The following is a 402-amino-acid chain: Sulfate adenylyltransferase (402 aa).

Belongs to the sulfate adenylyltransferase family.

The catalysed reaction is sulfate + ATP + H(+) = adenosine 5'-phosphosulfate + diphosphate. Its pathway is sulfur metabolism; hydrogen sulfide biosynthesis; sulfite from sulfate: step 1/3. This is Sulfate adenylyltransferase from Thiobacillus denitrificans (strain ATCC 25259 / T1).